Consider the following 341-residue polypeptide: Phospholipid phosphatase homolog 1.2 homolog (341 aa).

The next 3 helical transmembrane spans lie at 30-50, 71-91, and 122-142; these read LFIF…LLGV, ITAV…VLFV, and LLTY…LNIV. N-linked (GlcNAc...) asparagine glycosylation occurs at N162. Transmembrane regions (helical) follow at residues 223 to 243 and 257 to 277; these read RIVV…ISFS and VGIF…TDLF. Disordered regions lie at residues 284–308 and 322–341; these read SETQ…ERHR and FEAT…PQSA. A compositionally biased stretch (basic and acidic residues) spans 299–308; that stretch reads RNSEDEERHR.

Belongs to the PA-phosphatase related phosphoesterase family.

The protein resides in the membrane. In Caenorhabditis elegans, this protein is Phospholipid phosphatase homolog 1.2 homolog.